The sequence spans 91 residues: Large ribosomal subunit protein bL27 (91 aa).

The segment at 1–22 (MAHKKAGGSSRNGRDSDGRRLG) is disordered.

It belongs to the bacterial ribosomal protein bL27 family.

This is Large ribosomal subunit protein bL27 from Beijerinckia indica subsp. indica (strain ATCC 9039 / DSM 1715 / NCIMB 8712).